The sequence spans 385 residues: MNPVPAQREYFLDSIRAWLMLLGIPFHISLIYSSHTWHVNSAEPSLWLTLFNDFIHSFRMQVFFVISGYFSYMLFLRYPLKKWWKVRVERVGIPMLTAIPLLTLPQFIMLQYVKGKAESWPGLSLYDKYNTLAWELISHLWFLLVLVVMTTLCVWIFKRIRNNLENSDKTNKKFSMVKLSVIFLCLGIGYAVIRRTIFIVYPPILSNGTFNFIVMQTLFYLPFFILGALAFIFPHLKALFTTPSRGCTLAAALAFVAYLLNQRYGSGDAWMYETESVITMVLGLWMVNVVFSFGHRLLNFQSARVTYFVNASLFIYLVHHPLTLFFGAYITPHITSNWLGFLCGLIFVVGIAIILYEIHLRIPLLKFLFSGKPVVKRENDKAPAR.

Transmembrane regions (helical) follow at residues 17–39 (AWLMLLGIPFHISLIYSSHTWHV), 54–76 (FIHSFRMQVFFVISGYFSYMLFL), 88–110 (VERVGIPMLTAIPLLTLPQFIML), 136–158 (LISHLWFLLVLVVMTTLCVWIFK), 179–198 (LSVIFLCLGIGYAVIRRTIF), 213–235 (IVMQTLFYLPFFILGALAFIFPH), 242–261 (TPSRGCTLAAALAFVAYLLN), 276–295 (SVITMVLGLWMVNVVFSFGH), 308–330 (FVNASLFIYLVHHPLTLFFGAYI), and 334–356 (ITSNWLGFLCGLIFVVGIAIILY).

This sequence belongs to the acyltransferase 3 family. OpgC subfamily.

The protein resides in the cell membrane. It participates in glycan metabolism; osmoregulated periplasmic glucan (OPG) biosynthesis. Functionally, necessary for the succinyl substitution of periplasmic glucans. Could catalyze the transfer of succinyl residues from the cytoplasmic side of the membrane to the nascent glucan backbones on the periplasmic side of the membrane. The polypeptide is Glucans biosynthesis protein C (Escherichia coli O157:H7).